The sequence spans 201 residues: MDVKACYQNAKALLEGHFLLSSGFHSNYYLQSAKVLENPKLAEQLALELAKQIQNARLNIECVCSPAIGGILAGYELARALGVRFIFTERVNGVMALRRGFEVKPNEKILVCEDIITTGKSAMECAKVLEEKGAHIVAFAALANRGICKRTHSSLKAQEDACLPSELPLFALEDFVFDMHEPKHCPLCTTSVAIKPGSRGN.

Residue 113–121 (EDIITTGKS) participates in 5-phospho-alpha-D-ribose 1-diphosphate binding. The orotate site is built by Thr-117 and Arg-145.

This sequence belongs to the purine/pyrimidine phosphoribosyltransferase family. PyrE subfamily. In terms of assembly, homodimer. Mg(2+) is required as a cofactor.

The catalysed reaction is orotidine 5'-phosphate + diphosphate = orotate + 5-phospho-alpha-D-ribose 1-diphosphate. Its pathway is pyrimidine metabolism; UMP biosynthesis via de novo pathway; UMP from orotate: step 1/2. Catalyzes the transfer of a ribosyl phosphate group from 5-phosphoribose 1-diphosphate to orotate, leading to the formation of orotidine monophosphate (OMP). This is Orotate phosphoribosyltransferase from Helicobacter acinonychis (strain Sheeba).